The following is a 315-amino-acid chain: Initiation factor TFIIB homolog (315 aa).

This sequence belongs to the asfivirus C315R family.

Functionally, putative initation factor. The polypeptide is Initiation factor TFIIB homolog (African swine fever virus (strain Badajoz 1971 Vero-adapted) (Ba71V)).